Here is a 602-residue protein sequence, read N- to C-terminus: Arginine--tRNA ligase (602 aa).

A 'HIGH' region motif is present at residues 132 to 142 (ANPTGPLHVGH).

This sequence belongs to the class-I aminoacyl-tRNA synthetase family. As to quaternary structure, monomer.

It localises to the cytoplasm. The catalysed reaction is tRNA(Arg) + L-arginine + ATP = L-arginyl-tRNA(Arg) + AMP + diphosphate. This chain is Arginine--tRNA ligase, found in Cupriavidus metallidurans (strain ATCC 43123 / DSM 2839 / NBRC 102507 / CH34) (Ralstonia metallidurans).